The following is a 387-amino-acid chain: Enoyl-[acyl-carrier-protein] reductase 2, mitochondrial (387 aa).

The N-terminal 23 residues, 1–23 (MYRNQLARASLRSTSSINQIRNM), are a transit peptide targeting the mitochondrion. Tyrosine 79 functions as the Proton donor in the catalytic mechanism. Residues asparagine 172, 199–202 (NSAV), 222–224 (RDR), 297–300 (YGGM), 322–324 (FWV), and lysine 382 contribute to the NADP(+) site.

It belongs to the zinc-containing alcohol dehydrogenase family. Quinone oxidoreductase subfamily. As to quaternary structure, homodimer.

The protein resides in the mitochondrion matrix. The catalysed reaction is a 2,3-saturated acyl-[ACP] + NADP(+) = a (2E)-enoyl-[ACP] + NADPH + H(+). Catalyzes the NADPH-dependent reduction of trans-2-enoyl thioesters in mitochondrial fatty acid synthesis (fatty acid synthesis type II). Fatty acid chain elongation in mitochondria uses acyl carrier protein (ACP) as an acyl group carrier, but the enzyme accepts both ACP and CoA thioesters as substrates in vitro. Required for respiration and the maintenance of the mitochondrial compartment. The polypeptide is Enoyl-[acyl-carrier-protein] reductase 2, mitochondrial (ETR2) (Debaryomyces hansenii (strain ATCC 36239 / CBS 767 / BCRC 21394 / JCM 1990 / NBRC 0083 / IGC 2968) (Yeast)).